The chain runs to 819 residues: Probable beta-glucosidase G (819 aa).

Positions 1-20 are cleaved as a signal peptide; sequence MTSASQILVWGLLAASGAQA. 5 N-linked (GlcNAc...) asparagine glycosylation sites follow: Asn41, Asn59, Asn107, Asn228, and Asn277. Residue Asp305 is part of the active site. Asn337, Asn344, Asn351, Asn403, Asn500, Asn509, Asn554, Asn567, Asn588, Asn627, Asn683, and Asn719 each carry an N-linked (GlcNAc...) asparagine glycan.

It belongs to the glycosyl hydrolase 3 family.

The protein resides in the secreted. The enzyme catalyses Hydrolysis of terminal, non-reducing beta-D-glucosyl residues with release of beta-D-glucose.. The protein operates within glycan metabolism; cellulose degradation. In terms of biological role, beta-glucosidases are one of a number of cellulolytic enzymes involved in the degradation of cellulosic biomass. Catalyzes the last step releasing glucose from the inhibitory cellobiose. The polypeptide is Probable beta-glucosidase G (bglG) (Emericella nidulans (strain FGSC A4 / ATCC 38163 / CBS 112.46 / NRRL 194 / M139) (Aspergillus nidulans)).